Reading from the N-terminus, the 471-residue chain is Tryptophanase (471 aa).

Residues lysine 5, lysine 115, and lysine 156 each carry the N6-acetyllysine modification. Position 270 is an N6-(pyridoxal phosphate)lysine (lysine 270). Lysine 450 carries the N6-acetyllysine modification.

It belongs to the beta-eliminating lyase family. Homotetramer. Pyridoxal 5'-phosphate is required as a cofactor.

It catalyses the reaction L-tryptophan + H2O = indole + pyruvate + NH4(+). Its pathway is amino-acid degradation; L-tryptophan degradation via pyruvate pathway; indole and pyruvate from L-tryptophan: step 1/1. The polypeptide is Tryptophanase (tnaA) (Escherichia coli O157:H7).